The primary structure comprises 328 residues: Tetraacyldisaccharide 4'-kinase (328 aa).

55–62 (TAGGNGKT) contributes to the ATP binding site.

Belongs to the LpxK family.

The catalysed reaction is a lipid A disaccharide + ATP = a lipid IVA + ADP + H(+). It participates in glycolipid biosynthesis; lipid IV(A) biosynthesis; lipid IV(A) from (3R)-3-hydroxytetradecanoyl-[acyl-carrier-protein] and UDP-N-acetyl-alpha-D-glucosamine: step 6/6. In terms of biological role, transfers the gamma-phosphate of ATP to the 4'-position of a tetraacyldisaccharide 1-phosphate intermediate (termed DS-1-P) to form tetraacyldisaccharide 1,4'-bis-phosphate (lipid IVA). The sequence is that of Tetraacyldisaccharide 4'-kinase from Escherichia coli (strain 55989 / EAEC).